The following is a 599-amino-acid chain: UvrABC system protein C (599 aa).

Residues 13–91 enclose the GIY-YIG domain; it reads NLPGVYRMIN…IKGFMPRYNV (79 aa). The region spanning 200 to 235 is the UVR domain; it reads QQVMDELGEKMNEAAEKMEYELAAVYRDRIQSLRQV.

Belongs to the UvrC family. In terms of assembly, interacts with UvrB in an incision complex.

Its subcellular location is the cytoplasm. The UvrABC repair system catalyzes the recognition and processing of DNA lesions. UvrC both incises the 5' and 3' sides of the lesion. The N-terminal half is responsible for the 3' incision and the C-terminal half is responsible for the 5' incision. This chain is UvrABC system protein C, found in Methylobacillus flagellatus (strain ATCC 51484 / DSM 6875 / VKM B-1610 / KT).